The sequence spans 466 residues: MVRNLTKKSFALSALVAASLMASGVMASDKTEPRNEEYKDKFSKQYNSWHDTAESKEVVDMLEEVPSLVVLWAGYGFAKDYNAPRGHMYAVTDVRNTLRTGAPKAATDGPMPMACWSCKSPDVPRVIEEQGEDGYFTGKWYKGGAEIVNTIGCGDCHEKGKSKLRVSRPFAERAFETLDTPFAKASKKDKQSMVCAQCHVEYYFEKTKDKKGFVKFPWDQGVTVEAMETYYDNLEFKDWTHKVSKTPMLKAQHPGYETWKLGVHGQNNVSCTDCHMPKVKNDKGRKYTDHKVGNPFDRFEETCGTCHEQSKEFMVNLTKERKVKVADLKARAETQLVKAHFEAKAAWDAGATEAEMKPILTDIRHSQWRWDYATASHGVAAHAPDEALRVLGTSVDKAADARIKLAQLLAVKGVKQPIAYPDTSTKAKAQAALGMDMKKMNADKADFKKNTLPKWEAEAKKREATY.

A signal peptide spans 1-27 (MVRNLTKKSFALSALVAASLMASGVMA). His-87 provides a ligand contact to heme c. Heme is bound by residues Cys-115, Cys-118, and Lys-119. Positions 153, 156, 157, 195, 198, and 199 each coordinate heme c. Residues Glu-201, Tyr-202, Lys-250, and Gln-252 each contribute to the Ca(2+) site. Tyr-202 serves as a coordination point for substrate. A substrate-binding site is contributed by His-253. Heme c-binding residues include His-264, Cys-271, Cys-274, His-275, His-290, Cys-303, Cys-306, His-307, and His-382.

It belongs to the cytochrome c-552 family. Ca(2+) serves as cofactor. The cofactor is heme c.

Its subcellular location is the periplasm. It carries out the reaction 6 Fe(III)-[cytochrome c] + NH4(+) + 2 H2O = 6 Fe(II)-[cytochrome c] + nitrite + 8 H(+). It functions in the pathway nitrogen metabolism; nitrate reduction (assimilation). Functionally, catalyzes the reduction of nitrite to ammonia, consuming six electrons in the process. The protein is Cytochrome c-552 of Shewanella sediminis (strain HAW-EB3).